Consider the following 246-residue polypeptide: Small ribosomal subunit protein uS2 (246 aa).

The protein belongs to the universal ribosomal protein uS2 family.

The sequence is that of Small ribosomal subunit protein uS2 from Burkholderia cenocepacia (strain HI2424).